The chain runs to 349 residues: Signal peptidase I (349 aa).

2 helical membrane passes run 3 to 23 (NLFFVILLAVGFGVWKVLDYF) and 25 to 45 (LPNTFSILLLILTALSGVLWC). Over 46–80 (YHRFVVLPKRHRQVARAEQRSGKTLSEEEKAKIEP) the chain is Cytoplasmic. A helical transmembrane segment spans residues 81 to 101 (ISEASEFLSSLFPVLAVVFLV). The Periplasmic portion of the chain corresponds to 102–349 (RSFLFEPFQI…RFERFFTAIK (248 aa)). Catalysis depends on residues Ser115 and Lys196.

It belongs to the peptidase S26 family.

The protein resides in the cell inner membrane. The catalysed reaction is Cleavage of hydrophobic, N-terminal signal or leader sequences from secreted and periplasmic proteins.. This chain is Signal peptidase I (lepB), found in Haemophilus influenzae (strain ATCC 51907 / DSM 11121 / KW20 / Rd).